The chain runs to 89 residues: uncharacterized protein (89 aa).

To M.jannaschii MJ1436.

This is an uncharacterized protein from Methanothermobacter thermautotrophicus (strain ATCC 29096 / DSM 1053 / JCM 10044 / NBRC 100330 / Delta H) (Methanobacterium thermoautotrophicum).